We begin with the raw amino-acid sequence, 366 residues long: MTKITLSDLPLREELRGEHAYGAPQLNVDIRLNTNENPYPPSEALVADLVATVDKIATELNRYPERDAVELRDELAAYITKQTGVAVTRDNLWAANGSNEILQQLLQAFGGPGRTALGFQPSYSMHPILAKGTHTEFIAVSRGADFRIDMDVALEEIRAKQPDIVFVTTPNNPTGDVTSLDDIERIINVAPGIVIVDEAYAEFSPSPSATTLLEKYPTKLVVSRTMSKAFDFAGGRLGYFVANPAFIDAVMLVRLPYHLSALSQAAAIVALRHSADTLGTVEKLSVERVRVAARLEELGYAVVPSESNFVFFGDFSDQHAAWQAFLDRGVLIRDVGIAGHLRTTIGVPEENDAFLDAAAEIIKLNL.

At K228 the chain carries N6-(pyridoxal phosphate)lysine.

It belongs to the class-II pyridoxal-phosphate-dependent aminotransferase family. Histidinol-phosphate aminotransferase subfamily. As to quaternary structure, homodimer. Pyridoxal 5'-phosphate serves as cofactor.

It carries out the reaction L-histidinol phosphate + 2-oxoglutarate = 3-(imidazol-4-yl)-2-oxopropyl phosphate + L-glutamate. It functions in the pathway amino-acid biosynthesis; L-histidine biosynthesis; L-histidine from 5-phospho-alpha-D-ribose 1-diphosphate: step 7/9. This is Histidinol-phosphate aminotransferase from Corynebacterium glutamicum (strain R).